A 715-amino-acid chain; its full sequence is Transcription factor MST12 (715 aa).

Over residues 214 to 224 the composition is skewed to low complexity; the sequence is SSSFNAQQVSF. 3 disordered regions span residues 214–243, 439–469, and 518–539; these read SSSF…MPPP, AAHR…NSPP, and PMPS…AQGG. C2H2-type zinc fingers lie at residues 564-588 and 594-616; these read HSCP…VRTH and YICP…KRTH. Positions 632 to 691 are disordered; it reads EEEYSGDDHLGSLEEASPTSEGGYVTSSLNSAMAHSNTSQHPGSNAVSPNPGPMSHAPTY. Polar residues predominate over residues 648–679; sequence SPTSEGGYVTSSLNSAMAHSNTSQHPGSNAVS.

This sequence belongs to the STE12 transcription factor family.

The protein resides in the nucleus. Transcription factor that may function downstream of PMK1 to regulate genes involved in infectious hyphae growth. Is not essential for vegetative growth, conidiation or appressorium formation. May be involved in the regulation of the expression of the cell surface sensor MSB2. The chain is Transcription factor MST12 from Pyricularia oryzae (strain 70-15 / ATCC MYA-4617 / FGSC 8958) (Rice blast fungus).